The chain runs to 381 residues: Malonyl-CoA-acyl carrier protein transacylase, mitochondrial (381 aa).

Active-site residues include serine 151 and histidine 268. At lysine 312 the chain carries N6-succinyllysine.

The protein belongs to the type II malonyltransferase family. Expressed in retinal ganglion cells.

It localises to the mitochondrion. It carries out the reaction holo-[ACP] + malonyl-CoA = malonyl-[ACP] + CoA. Its pathway is lipid metabolism; fatty acid biosynthesis. Its function is as follows. Catalyzes the transfer of a malonyl moiety from malonyl-CoA to the free thiol group of the phosphopantetheine arm of the mitochondrial ACP protein (NDUFAB1). This suggests the existence of the biosynthesis of fatty acids in mitochondria. The protein is Malonyl-CoA-acyl carrier protein transacylase, mitochondrial of Mus musculus (Mouse).